We begin with the raw amino-acid sequence, 387 residues long: Methylthioribose-1-phosphate isomerase (387 aa).

Catalysis depends on D257, which acts as the Proton donor.

This sequence belongs to the eIF-2B alpha/beta/delta subunits family. MtnA subfamily.

The protein resides in the cytoplasm. Its subcellular location is the nucleus. It catalyses the reaction 5-(methylsulfanyl)-alpha-D-ribose 1-phosphate = 5-(methylsulfanyl)-D-ribulose 1-phosphate. It participates in amino-acid biosynthesis; L-methionine biosynthesis via salvage pathway; L-methionine from S-methyl-5-thio-alpha-D-ribose 1-phosphate: step 1/6. Catalyzes the interconversion of methylthioribose-1-phosphate (MTR-1-P) into methylthioribulose-1-phosphate (MTRu-1-P). The polypeptide is Methylthioribose-1-phosphate isomerase (mri1) (Aspergillus fumigatus (strain CBS 144.89 / FGSC A1163 / CEA10) (Neosartorya fumigata)).